The chain runs to 730 residues: Cyclin-T2 (730 aa).

The interval 1–300 is interaction with MDFIC and MDFI; sequence MASGRGASSR…SVTGVPTNPS (300 aa). The Cyclin N-terminal domain occupies 12–147; sequence FFTREQLENT…IMLQTLGFEI (136 aa). An interaction with POLR2A region spans residues 250 to 300; the sequence is RLKKIRNWRANQAARKPKVDGQVSETPLLGSSLVQNSILVDSVTGVPTNPS. Polar residues-rich tracts occupy residues 341–350 and 360–389; these read TSYGLSSHQE and TEQL…SISL. The disordered stretch occupies residues 341-430; sequence TSYGLSSHQE…GPISTTPGII (90 aa). The span at 398–412 shows a compositional bias: basic and acidic residues; it reads DKISDHSSVKQEYTH. Residue Lys-407 forms a Glycyl lysine isopeptide (Lys-Gly) (interchain with G-Cter in SUMO2) linkage. Phosphoserine is present on Ser-480. The disordered stretch occupies residues 497 to 652; the sequence is DKKEKSGSLK…SSSSSSSSVK (156 aa). 2 stretches are compositionally biased toward basic and acidic residues: residues 517 to 543 and 552 to 565; these read SASK…EGSG and ISRD…EHPS. A compositionally biased stretch (basic residues) spans 566–578; that stretch reads SRHHTSSHKHSHS. Residues 579-588 are compositionally biased toward low complexity; it reads HSGSSSGGSK. Phosphoserine is present on Ser-601. Low complexity-rich tracts occupy residues 606-616 and 637-652; these read SSDGISSSSSS and SSKS…SSVK.

The protein belongs to the cyclin family. Cyclin C subfamily. In terms of assembly, interacts with CDK9 to form P-TEFb. Interacts with POLR2A (via the C-terminal domain (CTD)); mediates transcriptional activity. Interacts with HEXIM1; mediates formation of a tripartite complex with KPNA2. Interacts with HEXIM2. Interacts with PKN1; enhances MYOD1-dependent transcription. P-TEFB complex interacts with RB1; promotes phosphorylation of RB1. P-TEFB complex interacts with MYOD1; promotes the transcriptional activity of MYOD1 through its CDK9-mediated phosphorylation. Interacts with MDFI and MDFIC. Interacts with MON1B; down-regulates CCNT2-mediated activation of viral promoters during herpes simplex virus 1/HHV-1 infection. (Microbial infection) Interacts with HIV-2 and SIV Tat. Does not bind efficiently to the transactivation domain of the HIV-1 Tat. Ubiquitously expressed.

It is found in the cytoplasm. Its subcellular location is the perinuclear region. The protein resides in the nucleus. Functionally, regulatory subunit of the cyclin-dependent kinase pair (CDK9/cyclin T) complex, also called positive transcription elongation factor B (P-TEFB), which is proposed to facilitate the transition from abortive to production elongation by phosphorylating the CTD (carboxy-terminal domain) of the large subunit of RNA polymerase II (RNAP II). The activity of this complex is regulated by binding with 7SK snRNA. Plays a role during muscle differentiation; P-TEFB complex interacts with MYOD1; this tripartite complex promotes the transcriptional activity of MYOD1 through its CDK9-mediated phosphorylation and binds the chromatin of promoters and enhancers of muscle-specific genes; this event correlates with hyperphosphorylation of the CTD domain of RNA pol II. In addition, enhances MYOD1-dependent transcription through interaction with PKN1. Involved in early embryo development. (Microbial infection) Promotes transcriptional activation of early and late herpes simplex virus 1/HHV-1 promoters. The protein is Cyclin-T2 of Homo sapiens (Human).